Here is a 54-residue protein sequence, read N- to C-terminus: Relaxin (54 aa).

Q1 carries the pyrrolidone carboxylic acid modification. 3 cysteine pairs are disulfide-bonded: C10–C41, C22–C54, and C40–C45.

Belongs to the insulin family. In terms of assembly, heterodimer of a B chain and an A chain linked by two disulfide bonds.

Its subcellular location is the secreted. Relaxin is an ovarian hormone that acts with estrogen to produce dilatation of the birth canal in many mammals. This is Relaxin from Balaenoptera acutorostrata (Common minke whale).